Reading from the N-terminus, the 386-residue chain is Acyl-[acyl-carrier-protein] dehydrogenase MbtN (386 aa).

This sequence belongs to the acyl-CoA dehydrogenase family. The cofactor is FAD.

The protein operates within siderophore biosynthesis; mycobactin biosynthesis. Functionally, catalyzes the dehydrogenation at the alpha-beta position of ACP-bound acyl chains. This results in the introduction of a double bond in the lipidic chain, which is further transferred to the epsilon-amino group of lysine residue in the mycobactin core by MbtK. The polypeptide is Acyl-[acyl-carrier-protein] dehydrogenase MbtN (mbtN) (Mycobacterium bovis (strain ATCC BAA-935 / AF2122/97)).